Consider the following 141-residue polypeptide: HTH-type transcriptional repressor NsrR (141 aa).

Positions 2–129 (QLTSFTDYGL…DNYTLADLVE (128 aa)) constitute an HTH rrf2-type domain. Positions 28 to 51 (ISEVTDVYGVSRNHMVKIINQLSR) form a DNA-binding region, H-T-H motif. Positions 91, 96, and 102 each coordinate [2Fe-2S] cluster.

[2Fe-2S] cluster serves as cofactor.

In terms of biological role, nitric oxide-sensitive repressor of genes involved in protecting the cell against nitrosative stress. May require iron for activity. In Escherichia fergusonii (strain ATCC 35469 / DSM 13698 / CCUG 18766 / IAM 14443 / JCM 21226 / LMG 7866 / NBRC 102419 / NCTC 12128 / CDC 0568-73), this protein is HTH-type transcriptional repressor NsrR.